The primary structure comprises 383 residues: Probable disease resistance protein At4g19060 (383 aa).

Residues 36-84 (YEKWSSGKQRGSSSKHGNQSTHGDSSPTRNSSGSSKKGRPKANRVETSS) form a disordered region. Residues 41–70 (SGKQRGSSSKHGNQSTHGDSSPTRNSSGSS) show a composition bias toward polar residues. 2 consecutive NB-ARC domains span residues 75–184 (PKAN…MFKH) and 207–281 (VKEK…LAKA). 121-128 (GKYGVGKT) lines the ATP pocket.

Functionally, possible disease resistance protein. This Arabidopsis thaliana (Mouse-ear cress) protein is Probable disease resistance protein At4g19060.